Here is a 252-residue protein sequence, read N- to C-terminus: Probable transcriptional regulatory protein Caur_1043 (252 aa).

Over residues 1 to 14 the composition is skewed to basic residues; it reads MSGHSKWHTIRRTK. Residues 1–22 form a disordered region; sequence MSGHSKWHTIRRTKGVNDQRRG.

This sequence belongs to the TACO1 family.

Its subcellular location is the cytoplasm. The polypeptide is Probable transcriptional regulatory protein Caur_1043 (Chloroflexus aurantiacus (strain ATCC 29366 / DSM 635 / J-10-fl)).